The following is a 550-amino-acid chain: Arginine--tRNA ligase (550 aa).

Positions 125 to 135 (ANPTGPLHIGH) match the 'HIGH' region motif.

It belongs to the class-I aminoacyl-tRNA synthetase family. As to quaternary structure, monomer.

Its subcellular location is the cytoplasm. It catalyses the reaction tRNA(Arg) + L-arginine + ATP = L-arginyl-tRNA(Arg) + AMP + diphosphate. This chain is Arginine--tRNA ligase, found in Lawsonia intracellularis (strain PHE/MN1-00).